We begin with the raw amino-acid sequence, 220 residues long: Protein LURP-one-related 12 (220 aa).

The protein belongs to the LOR family.

Might be related to the phospholipid scramblase and tubby-like superfamily of membrane tethered transcription factors. This is Protein LURP-one-related 12 from Arabidopsis thaliana (Mouse-ear cress).